A 74-amino-acid chain; its full sequence is Antitoxin VapB39 (74 aa).

Functionally, antitoxin component of a type II toxin-antitoxin (TA) system. The polypeptide is Antitoxin VapB39 (vapB39) (Mycobacterium tuberculosis (strain CDC 1551 / Oshkosh)).